A 493-amino-acid polypeptide reads, in one-letter code: Monodehydroascorbate reductase, chloroplastic/mitochondrial (493 aa).

The transit peptide at 1–51 directs the protein to the chloroplast and mitochondrion; the sequence is MSAVRRVMALASTTLPTKSGLSLWCPSSPSLARRFPARFSPIGSRIASRSL. Residues 68 to 71, glutamate 95, arginine 102, lysine 107, and 201 to 202 each bind FAD; these read GGNA and RE. NAD(+) is bound by residues 224–230, glutamate 248, arginine 254, and glycine 313; that span reads GGYIGME. 226–230 serves as a coordination point for NADP(+); that stretch reads YIGME. NADP(+)-binding residues include arginine 254 and glycine 313. Aspartate 351 is a binding site for FAD. 367 to 368 is an NAD(+) binding site; sequence EH. NADP(+) is bound at residue 367–368; it reads EH. An FAD-binding site is contributed by valine 369. Arginine 373 contributes to the L-ascorbate binding site. Residue tyrosine 398 coordinates FAD. NAD(+) is bound at residue tyrosine 398. Tyrosine 398 serves as a coordination point for NADP(+). Arginine 400 serves as a coordination point for L-ascorbate.

This sequence belongs to the FAD-dependent oxidoreductase family. As to quaternary structure, interacts in vitro with TRXy. FAD serves as cofactor.

The protein localises to the plastid. It is found in the chloroplast. Its subcellular location is the mitochondrion. It carries out the reaction 2 monodehydro-L-ascorbate radical + NADH + H(+) = 2 L-ascorbate + NAD(+). It catalyses the reaction 2,4,6-trinitrotoluene + NADH = 2,4,6-trinitrotoluene radical + e(-) + NAD(+). Its activity is regulated as follows. Redox regulation of the activity by thioredoxin TRXy1. Functionally, catalyzes the conversion of monodehydroascorbate (MDA) to ascorbate, oxidizing NADH in the process. Mediates phytotoxicity of 2,4,6-trinitrotoluene (TNT), an explosive and environmental pollutant, by reducing TNT and forming a nitro radical that spontaneously reacts with atmospheric oxygen, generating reactive superoxide. Can also use 1-chloro-2,4-dinitrobenzene (CDNB) as substrate, but not 1-chloro-4-nitrobenzene (CNB). In Arabidopsis thaliana (Mouse-ear cress), this protein is Monodehydroascorbate reductase, chloroplastic/mitochondrial.